A 152-amino-acid polypeptide reads, in one-letter code: Large ribosomal subunit protein bL34c (152 aa).

The transit peptide at 1-91 directs the protein to the chloroplast; sequence MATLSLLSTG…DRCRRFVVRA (91 aa).

As to quaternary structure, component of the chloroplast large ribosomal subunit (LSU). Mature 70S chloroplast ribosomes of higher plants consist of a small (30S) and a large (50S) subunit. The 30S small subunit contains 1 molecule of ribosomal RNA (16S rRNA) and 24 different proteins. The 50S large subunit contains 3 rRNA molecules (23S, 5S and 4.5S rRNA) and 33 different proteins.

The protein resides in the plastid. It is found in the chloroplast. In terms of biological role, component of the chloroplast ribosome (chloro-ribosome), a dedicated translation machinery responsible for the synthesis of chloroplast genome-encoded proteins, including proteins of the transcription and translation machinery and components of the photosynthetic apparatus. The polypeptide is Large ribosomal subunit protein bL34c (RPL34) (Spinacia oleracea (Spinach)).